A 471-amino-acid polypeptide reads, in one-letter code: Putative multidrug resistance protein MdtD (471 aa).

The Periplasmic portion of the chain corresponds to M1–Q11. Residues L12–A32 traverse the membrane as a helical segment. The Cytoplasmic portion of the chain corresponds to L33–H48. A helical membrane pass occupies residues M49 to A69. Residues D70–N76 are Periplasmic-facing. The chain crosses the membrane as a helical span at residues I77–T97. Over L98–L101 the chain is Cytoplasmic. A helical transmembrane segment spans residues L102–M124. Topologically, residues K125 to T137 are periplasmic. Residues F138–V158 traverse the membrane as a helical segment. At E159 to H164 the chain is on the cytoplasmic side. Residues W165–M185 traverse the membrane as a helical segment. The Periplasmic segment spans residues P186–D196. The chain crosses the membrane as a helical span at residues L197 to S217. Over K218–P224 the chain is Cytoplasmic. The helical transmembrane segment at L225–A245 threads the bilayer. Residues Q246–T262 are Periplasmic-facing. A helical transmembrane segment spans residues F263–M283. At T284 to P285 the chain is on the cytoplasmic side. The chain crosses the membrane as a helical span at residues V286–M306. The Periplasmic portion of the chain corresponds to V307–T341. A helical transmembrane segment spans residues L342–L362. At Q363–S395 the chain is on the cytoplasmic side. A helical transmembrane segment spans residues M396–F416. The Periplasmic portion of the chain corresponds to G417–T430. The chain crosses the membrane as a helical span at residues V431 to A451. Over R452–Q471 the chain is Cytoplasmic.

It belongs to the major facilitator superfamily. TCR/Tet family.

It localises to the cell inner membrane. This chain is Putative multidrug resistance protein MdtD, found in Escherichia coli O45:K1 (strain S88 / ExPEC).